The chain runs to 775 residues: Subtilisin-like protease SBT1.5 (775 aa).

An N-terminal signal peptide occupies residues 1-19 (MAFFFYFFFLLTLSSPSSS). A propeptide spans 20–103 (ASSSNSLTYI…VIPEQVRHLH (84 aa)) (activation peptide). The 77-residue stretch at 27–103 (TYIVHVDHEA…VIPEQVRHLH (77 aa)) folds into the Inhibitor I9 domain. In terms of domain architecture, Peptidase S8 spans 107–617 (SPEFLGLRST…SGHVHPTKAM (511 aa)). The active-site Charge relay system is the D137. N-linked (GlcNAc...) asparagine glycosylation occurs at N196. H210 acts as the Charge relay system in catalysis. Residues 367-459 (MYPLVYGGSL…VGASGGDEIR (93 aa)) form the PA domain. Residue S549 is the Charge relay system of the active site. Residues N599, N638, and N762 are each glycosylated (N-linked (GlcNAc...) asparagine).

Belongs to the peptidase S8 family.

The protein resides in the secreted. The chain is Subtilisin-like protease SBT1.5 from Arabidopsis thaliana (Mouse-ear cress).